Here is a 126-residue protein sequence, read N- to C-terminus: Holo-[acyl-carrier-protein] synthase (126 aa).

Mg(2+) contacts are provided by Asp-8 and Glu-57.

This sequence belongs to the P-Pant transferase superfamily. AcpS family. It depends on Mg(2+) as a cofactor.

The protein resides in the cytoplasm. The catalysed reaction is apo-[ACP] + CoA = holo-[ACP] + adenosine 3',5'-bisphosphate + H(+). In terms of biological role, transfers the 4'-phosphopantetheine moiety from coenzyme A to a Ser of acyl-carrier-protein. This chain is Holo-[acyl-carrier-protein] synthase, found in Vibrio cholerae serotype O1 (strain ATCC 39541 / Classical Ogawa 395 / O395).